Here is a 474-residue protein sequence, read N- to C-terminus: PTS system N-acetylmuramic acid-specific EIIBC component (474 aa).

Residues 1–89 form the PTS EIIB type-1 domain; sequence MAKEISSELL…SELLGEAPVQ (89 aa). Topologically, residues 1-123 are cytoplasmic; sequence MAKEISSELL…LAKFATIFTP (123 aa). Cysteine 29 (phosphocysteine intermediate; for EIIB activity) is an active-site residue. Residues 115–474 form the PTS EIIC type-1 domain; that stretch reads AKFATIFTPL…LFGCRNVNLD (360 aa). A helical membrane pass occupies residues 124–144; that stretch reads LIPGFIAAGLLLGIATLIATV. Over 145–157 the chain is Periplasmic; that stretch reads MHVPADAQGTLPD. The chain crosses the membrane as a helical span at residues 158-178; the sequence is ALNFMKVFSKGLFTFLVILVG. Residues 179-180 are Cytoplasmic-facing; the sequence is YN. A helical membrane pass occupies residues 181–201; it reads AAQAFGGTGVNGAIIAALFLL. Topologically, residues 202 to 217 are periplasmic; the sequence is GYNPAATTGYYAGFHD. A helical transmembrane segment spans residues 218–238; that stretch reads FFGLPIDPRGNIIGVLIAAWA. Over 239 to 260 the chain is Cytoplasmic; that stretch reads CARIEGMVRRFMPDDLDMLLTS. A helical membrane pass occupies residues 261-281; the sequence is LITLLITATLAYLIIMPLGGW. The Periplasmic portion of the chain corresponds to 282–301; that stretch reads LFEGMSWLFMHLNSNPLGCA. A helical transmembrane segment spans residues 302–322; that stretch reads VLAGLFLIAVVFGVHQGFIPV. Residues 323-334 lie on the Cytoplasmic side of the membrane; the sequence is YLALMDSQGFNS. Residues 335-355 traverse the membrane as a helical segment; the sequence is LFPILSMAGAGQVGAALALYW. At 356–368 the chain is on the periplasmic side; that stretch reads RAQPHSGLRSQVR. Residues 369–389 traverse the membrane as a helical segment; the sequence is GAIIPGLLGVGEPLIYGVTLP. Over 390-393 the chain is Cytoplasmic; it reads RMKP. The chain crosses the membrane as a helical span at residues 394 to 414; the sequence is FITACLGGAAGGLFIGLIAWW. Residues 415–440 lie on the Periplasmic side of the membrane; that stretch reads GLPMGLNSAFGPSGLVALPLMTSAQG. Residues 441 to 461 traverse the membrane as a helical segment; that stretch reads ILPAMAIYAGGILVAWVCGFI. Over 462–474 the chain is Cytoplasmic; that stretch reads FTTLFGCRNVNLD.

Its subcellular location is the cell inner membrane. It carries out the reaction N-acetyl-beta-D-muramate(out) + N(pros)-phospho-L-histidyl-[protein] = N-acetyl-beta-D-muramate 6-phosphate(in) + L-histidyl-[protein]. In terms of biological role, the phosphoenolpyruvate-dependent sugar phosphotransferase system (sugar PTS), a major carbohydrate active transport system, catalyzes the phosphorylation of incoming sugar substrates concomitantly with their translocation across the cell membrane. This system is involved in N-acetylmuramic acid (MurNAc) transport, yielding cytoplasmic MurNAc-6-P. Is also able to take up anhydro-N-acetylmuramic acid (anhMurNAc), but cannot phosphorylate the carbon 6, probably because of the 1,6-anhydro ring. The protein is PTS system N-acetylmuramic acid-specific EIIBC component (murP) of Shigella dysenteriae serotype 1 (strain Sd197).